Reading from the N-terminus, the 196-residue chain is Probable malonic semialdehyde reductase RutE (196 aa).

This sequence belongs to the nitroreductase family. HadB/RutE subfamily. FMN serves as cofactor.

The catalysed reaction is 3-hydroxypropanoate + NADP(+) = 3-oxopropanoate + NADPH + H(+). Its function is as follows. May reduce toxic product malonic semialdehyde to 3-hydroxypropionic acid, which is excreted. The polypeptide is Probable malonic semialdehyde reductase RutE (Escherichia coli O81 (strain ED1a)).